An 82-amino-acid chain; its full sequence is Small, acid-soluble spore protein gamma-type (82 aa).

2 stretches are compositionally biased toward polar residues: residues 1–24 (MANS…ASGQ) and 32–50 (ASET…SAAG). The segment at 1–82 (MANSNNKTNA…SAEQNKQQNS (82 aa)) is disordered. 2 consecutive repeats follow at residues 19-45 (QSAS…KQNQ) and 46-72 (QSAA…QQNQ). Over residues 69-82 (QQNQSAEQNKQQNS) the composition is skewed to low complexity.

This sequence belongs to the gamma-type SASP family.

SASP are bound to spore DNA. They are double-stranded DNA-binding proteins that cause DNA to change to an a-like conformation. They protect the DNA backbone from chemical and enzymatic cleavage and are thus involved in dormant spore's high resistance to UV light. The polypeptide is Small, acid-soluble spore protein gamma-type (Bacillus subtilis).